The following is a 503-amino-acid chain: Secreted RxLR effector protein RXLR-C08 (503 aa).

An N-terminal signal peptide occupies residues methionine 1–alanine 22. 3 N-linked (GlcNAc...) asparagine glycosylation sites follow: asparagine 27, asparagine 35, and asparagine 45. A dEER motif is present at residues aspartate 57–arginine 60. Residues asparagine 108, asparagine 197, and asparagine 374 are each glycosylated (N-linked (GlcNAc...) asparagine).

This sequence belongs to the RxLR effector family.

The protein localises to the secreted. The protein resides in the host Golgi apparatus. In terms of biological role, secreted effector that suppresses pattern-triggered immunity (PTI) in plant host. The polypeptide is Secreted RxLR effector protein RXLR-C08 (Plasmopara halstedii (Downy mildew of sunflower)).